A 465-amino-acid chain; its full sequence is Sensor histidine kinase ZraS (465 aa).

Residues methionine 1–tryptophan 14 lie on the Cytoplasmic side of the membrane. The chain crosses the membrane as a helical span at residues leucine 15–isoleucine 35. Over arginine 36–threonine 203 the chain is Periplasmic. Residues leucine 204–tyrosine 224 form a helical membrane-spanning segment. Topologically, residues glutamine 225–aspartate 465 are cytoplasmic. Positions glycine 253–alanine 461 constitute a Histidine kinase domain. At histidine 256 the chain carries Phosphohistidine; by autocatalysis.

Post-translationally, autophosphorylated.

The protein localises to the cell inner membrane. It catalyses the reaction ATP + protein L-histidine = ADP + protein N-phospho-L-histidine.. With respect to regulation, activity of the ZraS/ZraR two-component system is repressed by the zinc-bound form of ZraP, which probably interacts with the periplasmic region of ZraS. In terms of biological role, part of the Zra signaling pathway, an envelope stress response (ESR) system composed of the periplasmic accessory protein ZraP, the histidine kinase ZraS and the transcriptional regulator ZraR. The ZraPSR system contributes to antibiotic resistance and is important for membrane integrity in the presence of membrane-targeting biocides. ZraS is a member of the two-component regulatory system ZraS/ZraR. Functions as a membrane-associated sensor kinase that phosphorylates ZraR in response to high concentrations of Zn(2+) or Pb(2+) in the medium. The chain is Sensor histidine kinase ZraS (zraS) from Salmonella typhi.